A 1253-amino-acid polypeptide reads, in one-letter code: Cytoplasmic FMR1-interacting protein 1 (1253 aa).

The residue at position 583 (Ser583) is a Phosphoserine. Positions 724 to 732 (DKRLRSECK) are EIF4E-binding. Thr1234 carries the phosphothreonine modification.

Belongs to the CYFIP family. As to quaternary structure, component of the WAVE1 complex composed of ABI2, CYFIP1 or CYFIP2, BRK1, NCKAP1 and WASF1/WAVE1. Within the complex, a heterodimer containing NCKAP1 and CYFIP1 interacts with a heterotrimer formed by WAVE1, ABI2 and BRK1. Component of the CYFIP1-EIF4E-FMR1 complex which is composed of CYFIP, EIF4E and FMR1. Interacts with FMR1 but does not bind to related proteins FXR1 or FXR2. Interaction with EIF4E stimulates FMR1 binding. Component of the WAVE2 complex composed of ABI1, CYFIP1/SRA1, NCKAP1/NAP1 (NCKAP1L/HEM1 in hematopoietic cells) and WASF2/WAVE2. Interacts with the active GTP-bound form of RAC1. Interacts through its C-terminus with the C-terminus of DPYSL2/CRMP2 which is necessary for DPYSL2-induced axon outgrowth. Interacts with NYAP1, NYAP2 and MYO16. Interacts with TMEM108 (via N-terminus); the interaction associates TMEM108 with the WAVE1 complex. As to expression, highly expressed in embryonic and adult developing nervous system.

The protein localises to the cytoplasm. It is found in the perinuclear region. The protein resides in the cell projection. It localises to the lamellipodium. Its subcellular location is the ruffle. The protein localises to the synapse. It is found in the synaptosome. In terms of biological role, component of the CYFIP1-EIF4E-FMR1 complex which binds to the mRNA cap and mediates translational repression. In the CYFIP1-EIF4E-FMR1 complex this subunit is an adapter between EIF4E and FMR1. Promotes the translation repression activity of FMR1 in brain probably by mediating its association with EIF4E and mRNA. Regulates formation of membrane ruffles and lamellipodia. Plays a role in axon outgrowth. Binds to F-actin but not to RNA. Part of the WAVE complex that regulates actin filament reorganization via its interaction with the Arp2/3 complex. Actin remodeling activity is regulated by RAC1. Regulator of epithelial morphogenesis. May act as an invasion suppressor in cancers. As component of the WAVE1 complex, required for BDNF-NTRK2 endocytic trafficking and signaling from early endosomes. The polypeptide is Cytoplasmic FMR1-interacting protein 1 (Mus musculus (Mouse)).